The sequence spans 1053 residues: SPX and EXS domain-containing protein 2 (1053 aa).

The region spanning 1–339 (MKFRDYLKDN…PRIAKECRKY (339 aa)) is the SPX domain. Positions 54–88 (NNINKNNNNNNNNNNNNNNNNNNNNNINNNNNNNN) are enriched in low complexity. The tract at residues 54–137 (NNINKNNNNN…VGDEDGGDDD (84 aa)) is disordered. Residues 95–112 (QTNSNNISIPNQMAPQES) are compositionally biased toward polar residues. A compositionally biased stretch (acidic residues) spans 113–122 (SGEDEDDENE). 10 helical membrane-spanning segments follow: residues 391 to 411 (YIIG…IFKF), 427 to 447 (MAWL…LFAL), 476 to 496 (YLMY…VYVD), 510 to 530 (YLLL…ILPF), 561 to 581 (FFMS…QQIV), 595 to 615 (GVCF…PFYW), 630 to 652 (FFPH…LLWV), 666 to 686 (ILWF…DFTV), 712 to 732 (WVYY…LIVF), and 745 to 765 (PLFL…FIFF). Residues 596–798 (VCFKHKAVIF…SQDYKNYMEE (203 aa)) enclose the EXS domain. Disordered stretches follow at residues 799–871 (KKSR…VDDE) and 1023–1053 (HPEL…NKSR). Acidic residues predominate over residues 842 to 853 (DDDDDDESIDSD). Polar residues predominate over residues 1023–1040 (HPELNSSNRNQVDPNSPM).

This sequence belongs to the SYG1 (TC 2.A.94) family.

The protein localises to the membrane. The protein is SPX and EXS domain-containing protein 2 of Dictyostelium discoideum (Social amoeba).